The sequence spans 235 residues: Exotoxin type C (235 aa).

An N-terminal signal peptide occupies residues 1–27 (MKKINIIKIVFIITVILISTISPIIKS). 3 residues coordinate Zn(2+): His-194, His-228, and Asp-230.

This sequence belongs to the staphylococcal/streptococcal toxin family.

Its function is as follows. Superantigen that acts as a causative agent of the symptoms associated with scarlet fever. Has been associated with streptococcal toxic shock-like disease and may play a role in the early events of rheumatic fever. Superantigens cross-link major histocompatibility complex (MHC) class II and T-cell receptor (TCR) molecules, resulting in an overstimulation of T-cells associated with a massive release of pyrogenic and inflammatory cytokines. In Streptococcus pyogenes serotype M1, this protein is Exotoxin type C (speC).